The primary structure comprises 339 residues: Anthranilate phosphoribosyltransferase (339 aa).

5-phospho-alpha-D-ribose 1-diphosphate contacts are provided by residues Gly79, 82–83, Thr87, 89–92, 107–115, and Ser119; these read GD, NIST, and KHGNRAVSS. Gly79 contacts anthranilate. Ser91 is a binding site for Mg(2+). Asn110 contacts anthranilate. Position 165 (Arg165) interacts with anthranilate. Mg(2+)-binding residues include Asp224 and Glu225.

This sequence belongs to the anthranilate phosphoribosyltransferase family. In terms of assembly, homodimer. The cofactor is Mg(2+).

It carries out the reaction N-(5-phospho-beta-D-ribosyl)anthranilate + diphosphate = 5-phospho-alpha-D-ribose 1-diphosphate + anthranilate. The protein operates within amino-acid biosynthesis; L-tryptophan biosynthesis; L-tryptophan from chorismate: step 2/5. Its function is as follows. Catalyzes the transfer of the phosphoribosyl group of 5-phosphorylribose-1-pyrophosphate (PRPP) to anthranilate to yield N-(5'-phosphoribosyl)-anthranilate (PRA). This is Anthranilate phosphoribosyltransferase from Geobacillus sp. (strain WCH70).